The following is a 226-amino-acid chain: ATP-dependent dethiobiotin synthetase BioD (226 aa).

Position 12–17 (12–17 (GVGKTV)) interacts with ATP. Thr16 lines the Mg(2+) pocket. Residue Lys37 is part of the active site. A substrate-binding site is contributed by Thr41. ATP contacts are provided by residues Asp49, 108 to 111 (EGAG), 169 to 170 (GS), and 197 to 199 (PAG). Asp49 and Glu108 together coordinate Mg(2+).

The protein belongs to the dethiobiotin synthetase family. Homodimer. Mg(2+) serves as cofactor.

It is found in the cytoplasm. It carries out the reaction (7R,8S)-7,8-diammoniononanoate + CO2 + ATP = (4R,5S)-dethiobiotin + ADP + phosphate + 3 H(+). It functions in the pathway cofactor biosynthesis; biotin biosynthesis; biotin from 7,8-diaminononanoate: step 1/2. Functionally, catalyzes a mechanistically unusual reaction, the ATP-dependent insertion of CO2 between the N7 and N8 nitrogen atoms of 7,8-diaminopelargonic acid (DAPA, also called 7,8-diammoniononanoate) to form a ureido ring. The polypeptide is ATP-dependent dethiobiotin synthetase BioD (Mycobacterium leprae (strain Br4923)).